The sequence spans 434 residues: Methylenetetrahydrofolate--tRNA-(uracil-5-)-methyltransferase TrmFO (434 aa).

9–14 (GAGLAG) is an FAD binding site.

It belongs to the MnmG family. TrmFO subfamily. FAD is required as a cofactor.

The protein localises to the cytoplasm. The enzyme catalyses uridine(54) in tRNA + (6R)-5,10-methylene-5,6,7,8-tetrahydrofolate + NADH + H(+) = 5-methyluridine(54) in tRNA + (6S)-5,6,7,8-tetrahydrofolate + NAD(+). It carries out the reaction uridine(54) in tRNA + (6R)-5,10-methylene-5,6,7,8-tetrahydrofolate + NADPH + H(+) = 5-methyluridine(54) in tRNA + (6S)-5,6,7,8-tetrahydrofolate + NADP(+). In terms of biological role, catalyzes the folate-dependent formation of 5-methyl-uridine at position 54 (M-5-U54) in all tRNAs. The protein is Methylenetetrahydrofolate--tRNA-(uracil-5-)-methyltransferase TrmFO of Listeria monocytogenes serovar 1/2a (strain ATCC BAA-679 / EGD-e).